We begin with the raw amino-acid sequence, 84 residues long: Beta/gamma-crystallin (84 aa).

Beta/gamma crystallin 'Greek key' domains follow at residues 2–42 (GKII…IVES) and 43–84 (GTWF…VKQQ). Residues 64–84 (KYPNPGSWGGNDDELSSVKQQ) form a disordered region.

It belongs to the beta/gamma-crystallin family. Monomer. Palps of larvae and otolith of the light-sensing ocellus.

Functionally, structural component of the neuroectodermal visual system. In Ciona intestinalis (Transparent sea squirt), this protein is Beta/gamma-crystallin.